Reading from the N-terminus, the 233-residue chain is Peroxisomal membrane protein 11-5 (233 aa).

The Cytoplasmic segment spans residues 1 to 92 (MSSLESARAD…PLILLGKSKN (92 aa)). The chain crosses the membrane as a helical span at residues 93 to 113 (ALLSTFLFLDQIVWAGRTGIY). At 114 to 206 (KNKERAEFLS…LLQLAPKKVT (93 aa)) the chain is on the lumenal side. The helical transmembrane segment at 207–226 (PRVTGAFGFASSLIACYQLL) threads the bilayer.

Belongs to the peroxin-11 family. In terms of tissue distribution, expressed in seedlings, roots, shoots, leaf sheaths, flag leaf, panicles, spikelets, and endosperm.

It localises to the peroxisome membrane. Functionally, involved in peroxisomal proliferation. In Oryza sativa subsp. japonica (Rice), this protein is Peroxisomal membrane protein 11-5 (PEX11-5).